Consider the following 1088-residue polypeptide: Ran-binding protein 17 (1088 aa).

A2 is subject to N-acetylalanine. Residue S569 is modified to Phosphoserine.

It belongs to the exportin family. Binds to nucleoporins and the GTP-bound form of Ran. As to expression, highly expressed in testis, moderately in pancreas and weakly in other tissues studied.

Its subcellular location is the cytoplasm. It is found in the nucleus. The protein localises to the nuclear pore complex. Functionally, may function as a nuclear transport receptor. The polypeptide is Ran-binding protein 17 (RANBP17) (Homo sapiens (Human)).